Here is a 195-residue protein sequence, read N- to C-terminus: Dehydrin DHN1 (195 aa).

Positions 1 to 195 (MAEYGDQYGR…IKEKLPGGHH (195 aa)) are disordered. A compositionally biased stretch (low complexity) spans 37–48 (YGTTGTTVGYGT). Over residues 50–64 (QCVTTVTTGAQKTDQ) the composition is skewed to polar residues. Over residues 65 to 88 (YGTPGTTGAYGTDQYGTTGTTGEY) the composition is skewed to low complexity. Basic and acidic residues-rich tracts occupy residues 136–153 (KEKI…DDQT) and 173–195 (SPEH…GGHH).

This sequence belongs to the plant dehydrin family. Phosphorylated in vitro by CK2. As to expression, expressed in roots and leaves.

It localises to the cytoplasm. Its subcellular location is the nucleus. In Avicennia marina (Grey mangrove), this protein is Dehydrin DHN1.